The primary structure comprises 926 residues: Protein Niban 1 (926 aa).

The N-myristoyl glycine moiety is linked to residue Gly2. Ser578, Ser581, Ser595, Ser601, and Ser640 each carry phosphoserine. Disordered regions lie at residues 604-699 (LPGA…VPGS) and 719-889 (VEND…EQVN). Over residues 661–672 (VENTAGPLSSHL) the composition is skewed to polar residues. Phosphoserine is present on Ser699. The segment covering 733 to 745 (NIKEEESKIHPEA) has biased composition (basic and acidic residues). At Ser755 the chain carries Phosphoserine. Over residues 756-767 (CEEREVREKEAQ) the composition is skewed to basic and acidic residues. Residues 784–797 (GRGSTSQSTSGGLT) show a composition bias toward low complexity. Positions 840–854 (VTVTPQEDATLSSNP) are enriched in polar residues. A Phosphoserine modification is found at Ser923.

This sequence belongs to the Niban family.

It localises to the cytoplasm. The protein resides in the membrane. Regulates phosphorylation of a number of proteins involved in translation regulation including EIF2A, EIF4EBP1 and RPS6KB1. May be involved in the endoplasmic reticulum stress response. This is Protein Niban 1 from Mus musculus (Mouse).